The chain runs to 87 residues: Putative defensin-like protein 169 (87 aa).

Positions Met1–Gly21 are cleaved as a signal peptide. 4 cysteine pairs are disulfide-bonded: Cys36-Cys86, Cys48-Cys74, Cys53-Cys80, and Cys57-Cys82.

It belongs to the DEFL family.

Its subcellular location is the secreted. The polypeptide is Putative defensin-like protein 169 (Arabidopsis thaliana (Mouse-ear cress)).